The following is an 86-amino-acid chain: Small ribosomal subunit protein bS20 (86 aa).

Positions 1–25 (MANIKSAIKRAKTSEKRRVANSQEK) are disordered.

Belongs to the bacterial ribosomal protein bS20 family.

In terms of biological role, binds directly to 16S ribosomal RNA. This Exiguobacterium sp. (strain ATCC BAA-1283 / AT1b) protein is Small ribosomal subunit protein bS20.